The following is a 173-amino-acid chain: Lens fiber membrane intrinsic protein (173 aa).

The Cytoplasmic segment spans residues 1–3 (MYS). The helical transmembrane segment at 4–24 (FMGGGLFCAWVGTILLVVATA) threads the bilayer. Topologically, residues 25–66 (TDHWMQYRLSGSFAHQGLWRYCLGNKCFLQTESIAYWNATRA) are extracellular. C-linked (Man) tryptophan glycosylation is found at tryptophan 43 and tryptophan 61. Residue asparagine 62 is glycosylated (N-linked (GlcNAc...) asparagine). A helical membrane pass occupies residues 67–87 (FMILSALCATSGIIMGVLAFA). At 88–98 (QQSTFTRLSRP) the chain is on the cytoplasmic side. Residues 99-119 (FSAGIMFFASTLFVLLALAIY) form a helical membrane-spanning segment. Over 120 to 140 (TGVTVSFLGRRFGDWRFSWSY) the chain is Extracellular. A helical membrane pass occupies residues 141-161 (ILGWVALLMTFFAGIFYMCAY). Topologically, residues 162-173 (RMHECRRLATPR) are cytoplasmic. Threonine 171 is modified (phosphothreonine).

The protein belongs to the PMP-22/EMP/MP20 family. In terms of assembly, seems to be associated with itself or another lens membrane component via disulfide bonds.

Its subcellular location is the membrane. In terms of biological role, present in the thicker 16-17 nm junctions of mammalian lens fiber cells, where it may contribute to cell junctional organization. Acts as a receptor for calmodulin. May play an important role in both lens development and cataractogenesis. This Mus musculus (Mouse) protein is Lens fiber membrane intrinsic protein (Lim2).